We begin with the raw amino-acid sequence, 403 residues long: Histidine decarboxylase (403 aa).

Residue His-120 participates in substrate binding. Lys-233 is modified (N6-(pyridoxal phosphate)lysine).

It belongs to the group II decarboxylase family. Homotetramer. Pyridoxal 5'-phosphate is required as a cofactor.

The enzyme catalyses L-histidine + H(+) = histamine + CO2. The chain is Histidine decarboxylase from Pseudomonas entomophila (strain L48).